A 346-amino-acid polypeptide reads, in one-letter code: S-adenosylmethionine:tRNA ribosyltransferase-isomerase (346 aa).

The protein belongs to the QueA family. Monomer.

It is found in the cytoplasm. The catalysed reaction is 7-aminomethyl-7-carbaguanosine(34) in tRNA + S-adenosyl-L-methionine = epoxyqueuosine(34) in tRNA + adenine + L-methionine + 2 H(+). The protein operates within tRNA modification; tRNA-queuosine biosynthesis. Transfers and isomerizes the ribose moiety from AdoMet to the 7-aminomethyl group of 7-deazaguanine (preQ1-tRNA) to give epoxyqueuosine (oQ-tRNA). The chain is S-adenosylmethionine:tRNA ribosyltransferase-isomerase from Nitrosomonas eutropha (strain DSM 101675 / C91 / Nm57).